The primary structure comprises 94 residues: Small ribosomal subunit protein uS17 (94 aa).

It belongs to the universal ribosomal protein uS17 family. In terms of assembly, part of the 30S ribosomal subunit.

In terms of biological role, one of the primary rRNA binding proteins, it binds specifically to the 5'-end of 16S ribosomal RNA. This Deinococcus geothermalis (strain DSM 11300 / CIP 105573 / AG-3a) protein is Small ribosomal subunit protein uS17.